The primary structure comprises 200 residues: Ras-related protein Rab5 (200 aa).

GTP contacts are provided by residues glycine 17–serine 25, leucine 36–threonine 42, aspartate 65–glutamine 69, asparagine 123–aspartate 126, and serine 153–lysine 155. Positions glutamine 39–phenylalanine 47 match the Effector region motif. Residues cysteine 198 and cysteine 199 are each lipidated (S-geranylgeranyl cysteine).

The protein belongs to the small GTPase superfamily. Rab family. As to expression, virtually not expressed in leaves, higher in stems and roots, and highest in flowers.

It localises to the cell membrane. Its function is as follows. Protein transport. Probably involved in vesicular traffic. The protein is Ras-related protein Rab5 (RAB5) of Nicotiana tabacum (Common tobacco).